We begin with the raw amino-acid sequence, 60 residues long: MFTVFLLVVLATTVVSFTSDRAFRGRNAAAKASGLVGLTDKRQECCSYPACNLDHPELCG.

The first 16 residues, 1–16 (MFTVFLLVVLATTVVS), serve as a signal peptide directing secretion. The propeptide occupies 17–42 (FTSDRAFRGRNAAAKASGLVGLTDKR). Gln-43 carries the post-translational modification Pyrrolidone carboxylic acid. Disulfide bonds link Cys-45/Cys-51 and Cys-46/Cys-59. The ser-Xaa-Pro motif, crucial for potent interaction with nAChR stretch occupies residues 47-49 (SYP). Cys-59 carries the cysteine amide modification.

This sequence belongs to the conotoxin A superfamily. As to expression, expressed by the venom duct.

It localises to the secreted. Alpha-conotoxins act on postsynaptic membranes, they bind to the nicotinic acetylcholine receptors (nAChR) and thus inhibit them. The protein is Alpha-conotoxin-like 289 of Conus ammiralis (Admiral cone).